Reading from the N-terminus, the 702-residue chain is Epsin-1 (702 aa).

Residues 10–142 form the ENTH domain; sequence NFSKGYTDTQ…EDEHALKEAR (133 aa). 2 stretches are compositionally biased toward basic and acidic residues: residues 136 to 160 and 183 to 192; these read HALK…SSRF and SRYDDDDRDH. A disordered region spans residues 136-285; the sequence is HALKEARGDS…HQREREQQEQ (150 aa). Over residues 193–214 the composition is skewed to basic residues; that stretch reads RSRRRSRSRRPGRSRSRRRSRR. A phosphoserine mark is found at Ser212, Ser216, Ser218, and Ser223. UIM domains lie at 226-245 and 254-273; these read ENDP…AEED and DSEA…DEAR. The segment covering 230-248 has biased composition (basic and acidic residues); sequence ELQRVIEESKRQAEEDAKR. Ser255 carries the phosphoserine modification. Residues 266–283 are compositionally biased toward basic and acidic residues; it reads SKEEDEARQRHQREREQQ. Residue Thr406 is modified to Phosphothreonine. 2 disordered regions span residues 504–589 and 683–702; these read NHTG…RTGD and PMQG…LIDL. The segment covering 514 to 534 has biased composition (polar residues); sequence TGLQRQTTGYTGNNNPYSRPL. Residues 535 to 549 show a composition bias toward low complexity; it reads QSQSTGILQQQQQQS. The span at 557 to 577 shows a compositional bias: polar residues; it reads KTGSNNPFAQFSNLPSQSTAP. The segment covering 683-695 has biased composition (low complexity); it reads PMQGMQQQSMQPQ.

The protein belongs to the epsin family.

It localises to the cytoplasm. It is found in the membrane. Its function is as follows. Binds to membranes enriched in phosphatidylinositol 3,5-bisphosphate (PtdIns(3,5)P2) and phosphatidylinositol 4,5-bisphosphate (PtdIns(4,5)P2). Required for endocytosis and localization of actin. The protein is Epsin-1 (ent1) of Schizosaccharomyces pombe (strain 972 / ATCC 24843) (Fission yeast).